The following is a 214-amino-acid chain: UPF0758 protein (214 aa).

In terms of domain architecture, MPN spans 92-214 (VLSSWQALLD…ELSFRAEGLL (123 aa)). Positions 163, 165, and 176 each coordinate Zn(2+). The short motif at 163 to 176 (HNHPSGDPTPSQAD) is the JAMM motif element.

The protein belongs to the UPF0758 family.

In Rhodobacter capsulatus (Rhodopseudomonas capsulata), this protein is UPF0758 protein.